The primary structure comprises 644 residues: MGCISSKNVSCLTDQGDSPLPEPGLLSTSQQHRVLIDHSLEASHNSKRSRKSRRLGGSDLRIGVSLGSSHRNIEAEQAAAGWPAWLCSAAAEAVHGWVPLKAEAFQKLEKIGQGTYSSVFRAREVETGKMVALKKVKFDNLQPESIRFMAREILILRKLNHPNIMKLEGIVTSRASSSIYLVFEYMEHDLAGLSSNPDIRFTEPQIKCYMKQLLWGLEHCHMRGVIHRDIKASNILVNNKGVLKLGDFGLANVVTPSNKNQLTSRVVTLWYRAPELLMGSTSYGVSVDLWSVGCVFAEILMGKPILKGRTEIEQLHKIYKLCGSPQDSFWKRTKLPHATSFKPQHTYEATLRERCKDLSATGVYLLETLLSMEPDKRGTASSALNSEYFLTRPYACDPSSLPKYPPNKEMDAKYRDDMRRKRANLKLRDSGVGRKHKRPHRAEYDPKNYAKLPIRKDTLEVKNIPNEASRATTTTHGNYYKVSDLPMTTGPASGFAWAVKRRKDPDNISTLTYYQPSSKSQLSGTSVAFAKNTFGLNLKPDNDSVWEVQGNNYDDVIEEVPSHESKLSRIGERHGSLDGSGLDFSQREEDSPKKTLEHLQFGKQSISGPLIFKSGKIDEILQRNESNIRQAVRKSHLQREQDDR.

The Protein kinase domain maps to 105-389 (FQKLEKIGQG…ASSALNSEYF (285 aa)). ATP-binding positions include 111–119 (IGQGTYSSV) and Lys134. Residue Tyr116 is modified to Phosphotyrosine. Residue Asp229 is the Proton acceptor of the active site. Position 263 is a phosphothreonine (Thr263). The Nuclear localization signal signature appears at 420–427 (RKRANLKL). Residues 565 to 576 (SKLSRIGERHGS) show a composition bias toward basic and acidic residues. Positions 565–591 (SKLSRIGERHGSLDGSGLDFSQREEDS) are disordered.

The protein belongs to the protein kinase superfamily. CMGC Ser/Thr protein kinase family. CDC2/CDKX subfamily. In terms of processing, autophosphorylated. Expressed specifically in flowers and pollen.

The protein resides in the nucleus. This chain is Cyclin-dependent kinase C-2 C, found in Arabidopsis thaliana (Mouse-ear cress).